The sequence spans 226 residues: MIDSNFDIVLWVRMIKEGIEKKNLNPWDVNIAEIADYYIQKIKELKKFDIRLSADVILVAGILLRMKSEALYDECKVEEEEDYDYCDDYYDYDDIEEKPKKGKKKEKEDKDKNKKSKKPVTVDELIKTIEKELNKVKKSRKNREKKTNEVEEIIEELIEEDDISDIIAELLDDLMKEGIIVYQEKFKTREDRVRYFIPSLYLANDGKAELIQEKLFGELIIKLKSF.

Residues 121-163 are a coiled coil; sequence TVDELIKTIEKELNKVKKSRKNREKKTNEVEEIIEELIEEDDI.

This is an uncharacterized protein from Methanocaldococcus jannaschii (strain ATCC 43067 / DSM 2661 / JAL-1 / JCM 10045 / NBRC 100440) (Methanococcus jannaschii).